A 528-amino-acid chain; its full sequence is Low affinity inorganic phosphate transporter 4 (528 aa).

The Cytoplasmic portion of the chain corresponds to 1 to 18; sequence MGLEVLEALDSARTQWYH. Residues 19–39 traverse the membrane as a helical segment; the sequence is VTAIVIAGMGFFTDAYDLFCI. At 40 to 68 the chain is on the extracellular side; it reads STVSKLLGRLYYFDPSTNKPGKLPPSVNN. A helical membrane pass occupies residues 69-89; it reads VVTGVALVGTLSGQLVFGWLG. Residues 90–96 are Cytoplasmic-facing; that stretch reads DKLGRKK. The helical transmembrane segment at 97-117 threads the bilayer; that stretch reads VYGVTLIIMVACAICSGLSFG. Residues 118 to 122 lie on the Extracellular side of the membrane; the sequence is SSAKS. A helical transmembrane segment spans residues 123-143; the sequence is VMITLCFFRFWLGFGIGGDYP. The Cytoplasmic segment spans residues 144-158; sequence LSATIMSEYANKRTR. The helical transmembrane segment at 159–179 threads the bilayer; it reads GAFIAAVFAMQGVGIIFAGLV. Topologically, residues 180–208 are extracellular; it reads SMVFSGIFKAYYQAPRFNEDPILSTQPEG. The chain crosses the membrane as a helical span at residues 209–229; it reads DLLWRLILMIGAVPAAMTYYW. Residues 230–292 lie on the Cytoplasmic side of the membrane; the sequence is RMKMPETGRY…SEFFNRHGRH (63 aa). Residues 293–313 traverse the membrane as a helical segment; the sequence is LIGTMSCWFLLDIAFYSQNLT. The Extracellular portion of the chain corresponds to 314–341; sequence QKDIYPAMGLIRQDKEMNAIDEVFQTSR. Residues 342–362 form a helical membrane-spanning segment; sequence AMFVVALFGTFPGYWFTVFFI. Topologically, residues 363-371 are cytoplasmic; the sequence is EKLGRFKIQ. The helical transmembrane segment at 372–392 threads the bilayer; sequence LVGFFMMSFFMFVIGVKYEYL. Over 393–401 the chain is Extracellular; sequence KDENKNLFA. Residues 402–422 form a helical membrane-spanning segment; it reads LLYGLTFFFANFGPNSTTFVL. The Cytoplasmic segment spans residues 423–433; sequence PAELFPTRVRS. Residues 434 to 454 traverse the membrane as a helical segment; sequence TCHAFSAASGKAGAMVGAFGI. Residues 455 to 468 lie on the Extracellular side of the membrane; the sequence is QYYTLDGTPRKIRR. A helical membrane pass occupies residues 469 to 489; it reads AMMILAFTNLIGFFCTFLVTE. Residues 490–528 are Cytoplasmic-facing; the sequence is TKGRSLEEISGEDGRESELTATPNDRAPGIRQDSRTEKM. Residues 497–507 show a composition bias toward basic and acidic residues; that stretch reads EISGEDGRESE. The segment at 497–528 is disordered; that stretch reads EISGEDGRESELTATPNDRAPGIRQDSRTEKM.

Belongs to the major facilitator superfamily. Phosphate:H(+) symporter (TC 2.A.1.9) family. In terms of tissue distribution, mostly expressed in mycorrhizal roots. Also observed in root tips of non-mycorrhizal roots, in a phosphate (Pi) depended-manner, highest expression levels being observed in low Pi conditions.

It is found in the cell membrane. The catalysed reaction is phosphate(in) + H(+)(in) = phosphate(out) + H(+)(out). Low-affinity transporter for external inorganic phosphate (Pi) probably involved in the acquisition of phosphate released by arbuscular mycorrhizal (AM) fungi (e.g. Gigaspora gigantea, Glomus versiforme and G.intraradices) during AM symbiosis; required for propper mycorrhizal arbuscule morphology. Acts as a Pi-sensing machinery at the root tip level, independently of AM fungi, involved in the regulation of early root branching and lateral roots formation. This Medicago truncatula (Barrel medic) protein is Low affinity inorganic phosphate transporter 4.